A 352-amino-acid polypeptide reads, in one-letter code: tRNA pseudouridine synthase D (352 aa).

Catalysis depends on aspartate 78, which acts as the Nucleophile. The TRUD domain maps to 153–299 (GVPNYYGEQR…LDQDRRPLLL (147 aa)).

Belongs to the pseudouridine synthase TruD family.

It catalyses the reaction uridine(13) in tRNA = pseudouridine(13) in tRNA. In terms of biological role, responsible for synthesis of pseudouridine from uracil-13 in transfer RNAs. The sequence is that of tRNA pseudouridine synthase D from Aeromonas salmonicida (strain A449).